Here is a 411-residue protein sequence, read N- to C-terminus: Replication factor C subunit 2 (411 aa).

The tract at residues 1–36 is disordered; the sequence is MADFFNLKARQQAAAQASSSKTPTSKQESNRLQPWV. Residues 11–27 are compositionally biased toward low complexity; the sequence is QQAAAQASSSKTPTSKQ. Residues valine 36, arginine 40, 73–81, asparagine 195, and arginine 253 each bind ATP; that span reads GPPGTGKTS.

Belongs to the activator 1 small subunits family. Heteropentamer of subunits RFC1, RFC2, RFC3, RFC4 and RFC5 that forms a complex with PCNA in the presence of ATP.

Its subcellular location is the nucleus. In terms of biological role, the elongation of primed DNA templates by DNA polymerase delta and epsilon requires the action of the accessory proteins proliferating cell nuclear antigen (PCNA) and activator 1. Subunit 2 binds ATP and single-stranded DNA. The sequence is that of Replication factor C subunit 2 (RFC2) from Phaeosphaeria nodorum (strain SN15 / ATCC MYA-4574 / FGSC 10173) (Glume blotch fungus).